The sequence spans 303 residues: Thioesterase poxG (303 aa).

The protein belongs to the lcsJ thioesterase family.

It participates in secondary metabolite biosynthesis. Its function is as follows. Thioesterase; part of the gene cluster that mediates the biosynthesis of oxaleimides, cytotoxic compounds containing an unusual disubstituted succinimide moiety. The first step of the pathway is provided by the HR-PKS poxF that serves in a new mode of collaborative biosynthesis with the PKS-NRPS poxE, by providing the olefin containing amino acid substrate via the synthesis of an ACP-bound dec-4-enoate. The cytochrome P450 monooxygenase poxM-catalyzed oxidation at the alpha-position creates the enzyme-bound 2-hydroxydec-4-enoyl-ACP thioester, which may be prone to spontaneous hydrolysis to yield 2-hydroxydec-4-enoic acid due to increased electrophilicity of the carbonyl. 2-hydroxydec-4-enoic acid can then be further oxidized by poxM to yield the alpha-ketoacid 2-oxodec-4-enoicacid, which is reductively aminated by the aminotransferase poxL to yield (S,E)-2-aminodec-4-enoic acid. The Hybrid PKS-NRPS synthetase poxE then performs condensation between the octaketide product of its PKS modules and the amino group of (S,E)-2-aminodec-4-enoic acid which is activated and incorporated by the adenylation domain. The resulting aminoacyl product can be cyclized by the Diels-Alderase PoxQ and reductively released by the reductive (R) domain of poxE to yield an aldehyde intermediate. The released aldehyde is then substrate for a Knoevenagel condensation by the hydrolyase poxO followed by an oxidation at the 5-position of the pyrrolidone ring. The presence of the olefin from the amino acid building block allows for migration of the substituted allyl group to occur. This allylic transposition reaction takes place in a conjugate addition, semipinacol-like fashion to yield a succinimide intermediate. Iterative two-electron oxidations of the C7 methyl of the succinimide intermediate to the carboxylic acid can be catalyzed by one of two remaining cytochrome P450 monooxygenasess poxC or poxD to yield oxaleimide A. Subsequent oxidation yields the maleimide scaffold oxaleimide I. Both oxaleimide A and oxaleimide I can undergo oxidative modifications in the decalin ring to yield the series of products oxaleimides B to H. The protein is Thioesterase poxG of Penicillium oxalicum (strain 114-2 / CGMCC 5302) (Penicillium decumbens).